The chain runs to 176 residues: Ferritin, middle subunit (176 aa).

The Ferritin-like diiron domain occupies 7-156 (QNYHHDCERA…DHITNLTKMD (150 aa)). Residues E24, E59, H62, E104, and Q138 each contribute to the Fe cation site.

It belongs to the ferritin family. In terms of assembly, oligomer of 24 subunits. There are at least two types of subunits. The functional molecule forms a roughly spherical shell with a diameter of 12 nm and contains a central cavity into which the insoluble mineral iron core is deposited. Almost exclusively in the gonads.

It catalyses the reaction 4 Fe(2+) + O2 + 4 H(+) = 4 Fe(3+) + 2 H2O. Stores iron in a soluble, non-toxic, readily available form. Important for iron homeostasis. Has ferroxidase activity. Iron is taken up in the ferrous form and deposited as ferric hydroxides after oxidation. In Salmo salar (Atlantic salmon), this protein is Ferritin, middle subunit.